Reading from the N-terminus, the 350-residue chain is Kievitone hydratase (350 aa).

Residues 1-19 form the signal peptide; sequence MMISSVLVAGVVAVSAALA.

Homodimer. Post-translationally, glycosylated.

The protein resides in the secreted. The catalysed reaction is kievitone hydrate = kievitone + H2O. Converts fungitoxic kievitone to the less toxic kievitone hydrate, and thereby protects the pathogenic fungus against this phytoalexin. The protein is Kievitone hydratase (khs) of Fusarium solani subsp. phaseoli (Nectria haematococca).